A 145-amino-acid polypeptide reads, in one-letter code: D-aminoacyl-tRNA deacylase (145 aa).

The Gly-cisPro motif, important for rejection of L-amino acids motif lies at 137–138; the sequence is GP.

This sequence belongs to the DTD family. As to quaternary structure, homodimer.

The protein resides in the cytoplasm. It catalyses the reaction glycyl-tRNA(Ala) + H2O = tRNA(Ala) + glycine + H(+). It carries out the reaction a D-aminoacyl-tRNA + H2O = a tRNA + a D-alpha-amino acid + H(+). In terms of biological role, an aminoacyl-tRNA editing enzyme that deacylates mischarged D-aminoacyl-tRNAs. Also deacylates mischarged glycyl-tRNA(Ala), protecting cells against glycine mischarging by AlaRS. Acts via tRNA-based rather than protein-based catalysis; rejects L-amino acids rather than detecting D-amino acids in the active site. By recycling D-aminoacyl-tRNA to D-amino acids and free tRNA molecules, this enzyme counteracts the toxicity associated with the formation of D-aminoacyl-tRNA entities in vivo and helps enforce protein L-homochirality. The polypeptide is D-aminoacyl-tRNA deacylase (Shewanella putrefaciens (strain CN-32 / ATCC BAA-453)).